A 197-amino-acid polypeptide reads, in one-letter code: Peptide deformylase (197 aa).

Fe cation is bound by residues C106 and H148. Residue E149 is part of the active site. Residue H152 participates in Fe cation binding.

This sequence belongs to the polypeptide deformylase family. Requires Fe(2+) as cofactor.

It catalyses the reaction N-terminal N-formyl-L-methionyl-[peptide] + H2O = N-terminal L-methionyl-[peptide] + formate. Functionally, removes the formyl group from the N-terminal Met of newly synthesized proteins. Requires at least a dipeptide for an efficient rate of reaction. N-terminal L-methionine is a prerequisite for activity but the enzyme has broad specificity at other positions. This is Peptide deformylase from Mycobacterium ulcerans (strain Agy99).